The sequence spans 152 residues: Superoxide dismutase [Cu-Zn] (152 aa).

Cu cation contacts are provided by His45, His47, and His62. Residues Cys56 and Cys145 are joined by a disulfide bond. Zn(2+) contacts are provided by His62, His70, His79, and Asp82. His119 lines the Cu cation pocket.

Belongs to the Cu-Zn superoxide dismutase family. As to quaternary structure, homodimer. The cofactor is Cu cation. Zn(2+) is required as a cofactor.

It is found in the cytoplasm. The catalysed reaction is 2 superoxide + 2 H(+) = H2O2 + O2. Functionally, destroys radicals which are normally produced within the cells and which are toxic to biological systems. This chain is Superoxide dismutase [Cu-Zn] (SODCC), found in Pisum sativum (Garden pea).